An 887-amino-acid polypeptide reads, in one-letter code: CWF19-like protein 2 (887 aa).

Residues 1 to 143 are disordered; it reads MEAFSVRFES…DKRTEEECDS (143 aa). The stretch at 11–103 forms a coiled coil; the sequence is ASSIEERKEQ…KKQKCQKQSE (93 aa). The span at 14-72 shows a compositional bias: basic and acidic residues; sequence IEERKEQTRNARAEVLRQAKHNFEKEQRGEERKRLRDEDTWMLPDVHERIEQFSQEHSE. Ser-71 is modified (phosphoserine). Positions 73–98 are enriched in basic residues; that stretch reads KKKKKKDKHSKKVKKEKKKKRKKQKC. A compositionally biased stretch (low complexity) spans 99-110; the sequence is QKQSESTDSSAS. The segment covering 124 to 143 has biased composition (basic and acidic residues); the sequence is SDKEKTWKVKDKRTEEECDS. Residues 164 to 254 adopt a coiled-coil conformation; it reads SSSLKAEKET…RNFEDIVAEK (91 aa). Residue Lys-168 forms a Glycyl lysine isopeptide (Lys-Gly) (interchain with G-Cter in SUMO2) linkage. Disordered regions lie at residues 315-370 and 405-447; these read LEME…DEDE and SEES…GRRE. Positions 342-352 are enriched in basic and acidic residues; it reads CRRESALRKNQ. Phosphoserine is present on residues Ser-354 and Ser-366. Residues 414-430 show a composition bias toward basic and acidic residues; sequence RSDRRQENRKPSDKKPL. Positions 433–442 are enriched in polar residues; the sequence is WSYNANQHST. At Ser-478 the chain carries Phosphoserine. A coiled-coil region spans residues 495–524; sequence IKAEMMGNMELAEQLKAQLKEANKFKETQM. Residue Lys-597 forms a Glycyl lysine isopeptide (Lys-Gly) (interchain with G-Cter in SUMO2) linkage. Ser-622 carries the phosphoserine modification.

Belongs to the CWF19 family.

In Mus musculus (Mouse), this protein is CWF19-like protein 2 (Cwf19l2).